We begin with the raw amino-acid sequence, 221 residues long: Potassium voltage-gated channel subfamily E member 4 (221 aa).

The Extracellular portion of the chain corresponds to 1–86 (MHFLTIYPNC…AGGGSGNGNE (86 aa)). Asn9 is a glycosylation site (N-linked (GlcNAc...) asparagine). A compositionally biased stretch (polar residues) spans 58–72 (LNSTHPGTAASSSPL). Residues 58–77 (LNSTHPGTAASSSPLESRAA) form a disordered region. The helical transmembrane segment at 87–107 (YFYILVVMSFYGIFLIGIMLG) threads the bilayer. The Cytoplasmic segment spans residues 108–221 (YMKSKRREKK…GSSENIHQNS (114 aa)). The disordered stretch occupies residues 175–221 (SVSSESSSPDVHLTIQEEGADDELEETSETPLNESSEGSSENIHQNS). A compositionally biased stretch (acidic residues) spans 192-202 (EGADDELEETS). Residues 203 to 221 (ETPLNESSEGSSENIHQNS) show a composition bias toward polar residues.

Belongs to the potassium channel KCNE family. Forms heterooligomers with KCNA3, inhibiting its activity by impairing localization to the cell membrane. The stoichiometry of KCNA3 and KCNE4 in the heterooligomers are 4:1, 4:2, 4:3 or 4:4 respectively. Increasing the number of KCNE4 subunits steadily slows the activation KCNA3 and decreases its abundance at the cell membrane. However, a single subunit of KCNE4 is sufficient for the cooperative enhancement of the inactivating function of the channel. However, a single subunit of KCNE4 is sufficient for the cooperative enhancement of the inactivating function of the channel. Interacts with KCNQ1; impairs KCNQ1 localization in lipid rafts and inhibits voltage-gated potassium channel activity. Predominantly expressed in embryo and adult uterus. Low expression found in kidney, small intestine, lung and heart. In terms of tissue distribution, detected in kidney, thymus, and uterus (at protein level).

Its subcellular location is the membrane. Its function is as follows. Ancillary protein that functions as a regulatory subunit of the voltage-gated potassium (Kv) channel complex composed of pore-forming and potassium-conducting alpha subunits and of regulatory beta subunits. KCNE4 beta subunit modulates the gating kinetics and enhances stability of the channel complex. Associates with KCNQ1/KVLTQ1 alpha subunit to inhibit potassium currents. In terms of biological role, may inhibit KCNQ4-mediated potassium currents. This chain is Potassium voltage-gated channel subfamily E member 4, found in Homo sapiens (Human).